The chain runs to 74 residues: Cyclin-dependent kinases regulatory subunit (74 aa).

It belongs to the CKS family. In terms of assembly, forms a homohexamer that can probably bind six kinase subunits.

In terms of biological role, binds to the catalytic subunit of the cyclin dependent kinases Cdk1 and Cdk2, and is essential for their biological function. This Drosophila melanogaster (Fruit fly) protein is Cyclin-dependent kinases regulatory subunit (Cks30A).